The sequence spans 37 residues: Palicourein (37 aa).

The cyclopeptide (Gly-Asn) cross-link spans 1–37 (GDPTFCGETCRVIPVCTYSAALGCTCDDRSDGLCKRN). 3 disulfides stabilise this stretch: Cys6-Cys24, Cys10-Cys26, and Cys16-Cys34.

This sequence belongs to the cyclotide family. Post-translationally, this is a cyclic peptide.

Its function is as follows. Probably participates in a plant defense mechanism. Inhibits the cytopathic effects of the human immunodeficiency virus. The chain is Palicourein from Palicourea condensata (Cappel).